The sequence spans 449 residues: Glucose-6-phosphate isomerase (449 aa).

Residue Glu-291 is the Proton donor of the active site. Residues His-312 and Lys-426 contribute to the active site.

This sequence belongs to the GPI family.

It localises to the cytoplasm. It carries out the reaction alpha-D-glucose 6-phosphate = beta-D-fructose 6-phosphate. It functions in the pathway carbohydrate biosynthesis; gluconeogenesis. The protein operates within carbohydrate degradation; glycolysis; D-glyceraldehyde 3-phosphate and glycerone phosphate from D-glucose: step 2/4. Functionally, catalyzes the reversible isomerization of glucose-6-phosphate to fructose-6-phosphate. The chain is Glucose-6-phosphate isomerase from Streptococcus pyogenes serotype M12 (strain MGAS2096).